We begin with the raw amino-acid sequence, 121 residues long: Large ribosomal subunit protein bL12 (121 aa).

It belongs to the bacterial ribosomal protein bL12 family. In terms of assembly, homodimer. Part of the ribosomal stalk of the 50S ribosomal subunit. Forms a multimeric L10(L12)X complex, where L10 forms an elongated spine to which 2 to 4 L12 dimers bind in a sequential fashion. Binds GTP-bound translation factors.

Functionally, forms part of the ribosomal stalk which helps the ribosome interact with GTP-bound translation factors. Is thus essential for accurate translation. In Shigella sonnei (strain Ss046), this protein is Large ribosomal subunit protein bL12.